The following is a 280-amino-acid chain: Intimin (280 aa).

A Big-1 domain is found at 1–92 (ITEIKADKTT…MLKLLEVEFF (92 aa)). One can recognise a BIG2 domain in the interval 127 to 173 (ANGGNGKYTWYSANPAIASVDPSSGQVTLKDKGETTITVVSGDKQTA). A disulfide bond links Cys-201 and Cys-278.

It belongs to the intimin/invasin family.

Its subcellular location is the cell outer membrane. An inverse autotransporter. The chain is Intimin (eaeA) from Hafnia alvei.